We begin with the raw amino-acid sequence, 495 residues long: Cobyric acid synthase (495 aa).

One can recognise a GATase cobBQ-type domain in the interval 262–445 (CLEIAVIRLP…LHGLFDNHRW (184 aa)). The Nucleophile role is filled by Cys-340. His-437 is an active-site residue.

It belongs to the CobB/CobQ family. CobQ subfamily.

The protein operates within cofactor biosynthesis; adenosylcobalamin biosynthesis. Functionally, catalyzes amidations at positions B, D, E, and G on adenosylcobyrinic A,C-diamide. NH(2) groups are provided by glutamine, and one molecule of ATP is hydrogenolyzed for each amidation. The sequence is that of Cobyric acid synthase from Synechococcus sp. (strain JA-3-3Ab) (Cyanobacteria bacterium Yellowstone A-Prime).